A 162-amino-acid polypeptide reads, in one-letter code: Caveolin-2 (162 aa).

At 1–86 (MGLETEKADV…FEMSKYVIYK (86 aa)) the chain is on the cytoplasmic side. Phosphotyrosine; by SRC is present on Y19. 2 positions are modified to phosphoserine: S20 and S23. Phosphotyrosine; by SRC is present on Y27. Positions 87–107 (FLTVFLAIPLAFAAGILFATL) form an intramembrane region, helical. The Cytoplasmic segment spans residues 108 to 162 (SCLHIWIIMPFVKTCLMVLPSVQTIWKSVTDVVIAPLCTSIGRSFSSVSLQLSHD).

The protein belongs to the caveolin family. In terms of assembly, monomer or homodimer. Interacts with CAV1; the interaction forms a stable heterooligomeric complex that is required for targeting to lipid rafts and for caveolae formation. Tyrosine phosphorylated forms do not form heterooligomers with the Tyr-19-phosphorylated form existing as a monomer or dimer, and the Tyr-27-form as a monomer only. Interacts (tyrosine phosphorylated form) with the SH2 domain-containing proteins, RASA1, NCK1 and SRC. Interacts (tyrosine phosphorylated form) with INSR, the interaction (Tyr-27-phosphorylated form) is increased on insulin stimulation. Interacts (Tyr-19 phosphorylated form) with MAPK1 (phosphorylated form); the interaction, promoted by insulin, leads to nuclear location and MAPK1 activation. Interacts with STAT3; the interaction is increased on insulin-induced tyrosine phosphorylation leading to STAT activation. Post-translationally, phosphorylated on serine and tyrosine residues. CAV1 promotes phosphorylation on Ser-23 which then targets the complex to the plasma membrane, lipid rafts and caveolae. Phosphorylation on both Tyr-19 and Tyr-27 is required for insulin-induced 'Ser-727' phosphorylation of STAT3 and its activation. Phosphorylation on Tyr-19 is required for insulin-induced phosphorylation of MAPK1 and DNA binding of STAT3. Tyrosine phosphorylation is induced by both EGF and insulin. As to expression, expressed in aortic endothelial cells.

The protein resides in the nucleus. It localises to the cytoplasm. The protein localises to the golgi apparatus membrane. Its subcellular location is the cell membrane. It is found in the membrane. The protein resides in the caveola. Its function is as follows. May act as a scaffolding protein within caveolar membranes. Interacts directly with G-protein alpha subunits and can functionally regulate their activity. Acts as an accessory protein in conjunction with CAV1 in targeting to lipid rafts and driving caveolae formation. Positive regulator of cellular mitogenesis of the MAPK signaling pathway. Required for the insulin-stimulated nuclear translocation and activation of MAPK1 and STAT3, and the subsequent regulation of cell cycle progression. The sequence is that of Caveolin-2 (CAV2) from Bos taurus (Bovine).